Consider the following 149-residue polypeptide: Protein-export protein SecB (149 aa).

It belongs to the SecB family. As to quaternary structure, homotetramer, a dimer of dimers. One homotetramer interacts with 1 SecA dimer.

It is found in the cytoplasm. Functionally, one of the proteins required for the normal export of preproteins out of the cell cytoplasm. It is a molecular chaperone that binds to a subset of precursor proteins, maintaining them in a translocation-competent state. It also specifically binds to its receptor SecA. This Acidithiobacillus ferrooxidans (strain ATCC 23270 / DSM 14882 / CIP 104768 / NCIMB 8455) (Ferrobacillus ferrooxidans (strain ATCC 23270)) protein is Protein-export protein SecB.